A 358-amino-acid chain; its full sequence is Peptide chain release factor 1 (358 aa).

N5-methylglutamine is present on glutamine 233.

It belongs to the prokaryotic/mitochondrial release factor family. Post-translationally, methylated by PrmC. Methylation increases the termination efficiency of RF1.

Its subcellular location is the cytoplasm. In terms of biological role, peptide chain release factor 1 directs the termination of translation in response to the peptide chain termination codons UAG and UAA. This chain is Peptide chain release factor 1, found in Staphylococcus haemolyticus (strain JCSC1435).